Reading from the N-terminus, the 182-residue chain is MIFDEFTLKSQIRAVPDFPKAGVVFRDITPLFQSPRALRMTVDSFVQRYIEADFSHIGAMDARGFLIGSAVAYALNKPLILFRKQGKLPADVLAEAYQTEYGEAFLEVHADSLCEGDSVLIFDDLIATGGTLLAAASLVRRLGARVFEAAAIIDLPELGGSTRLQDAGIATFSLTAFALDER.

Belongs to the purine/pyrimidine phosphoribosyltransferase family. In terms of assembly, homodimer.

The protein localises to the cytoplasm. The enzyme catalyses AMP + diphosphate = 5-phospho-alpha-D-ribose 1-diphosphate + adenine. Its pathway is purine metabolism; AMP biosynthesis via salvage pathway; AMP from adenine: step 1/1. Functionally, catalyzes a salvage reaction resulting in the formation of AMP, that is energically less costly than de novo synthesis. The chain is Adenine phosphoribosyltransferase from Pseudomonas paraeruginosa (strain DSM 24068 / PA7) (Pseudomonas aeruginosa (strain PA7)).